Consider the following 396-residue polypeptide: Phosphoglycerate kinase (396 aa).

Substrate contacts are provided by residues 21–23, Arg36, 59–62, Arg118, and Arg151; these read DLN and HFGR. ATP-binding positions include Lys201, Glu323, and 353 to 356; that span reads GGDT.

It belongs to the phosphoglycerate kinase family. Monomer.

It is found in the cytoplasm. The enzyme catalyses (2R)-3-phosphoglycerate + ATP = (2R)-3-phospho-glyceroyl phosphate + ADP. It participates in carbohydrate degradation; glycolysis; pyruvate from D-glyceraldehyde 3-phosphate: step 2/5. The chain is Phosphoglycerate kinase from Brucella abortus biovar 1 (strain 9-941).